A 56-amino-acid chain; its full sequence is Ferredoxin (56 aa).

2 4Fe-4S ferredoxin-type domains span residues 2–28 (AYKILDTCVSCGACAAECPVDAISQGD) and 29–56 (TQFVIDADTCIDCGNCANVCPVGAPVQE). The [4Fe-4S] cluster site is built by C9, C12, C15, C19, C38, C41, C44, and C48.

Requires [4Fe-4S] cluster as cofactor.

Ferredoxins are iron-sulfur proteins that transfer electrons in a wide variety of metabolic reactions. The sequence is that of Ferredoxin (fer) from Clostridium perfringens (strain 13 / Type A).